We begin with the raw amino-acid sequence, 373 residues long: Erythronate-4-phosphate dehydrogenase (373 aa).

Substrate contacts are provided by Ser45 and Thr66. NAD(+)-binding residues include Asp146 and Thr173. The active site involves Arg206. Asp230 provides a ligand contact to NAD(+). The active site involves Glu235. The Proton donor role is filled by His252. NAD(+) is bound at residue Gly255. Tyr256 is a substrate binding site.

Belongs to the D-isomer specific 2-hydroxyacid dehydrogenase family. PdxB subfamily. Homodimer.

It localises to the cytoplasm. It catalyses the reaction 4-phospho-D-erythronate + NAD(+) = (R)-3-hydroxy-2-oxo-4-phosphooxybutanoate + NADH + H(+). Its pathway is cofactor biosynthesis; pyridoxine 5'-phosphate biosynthesis; pyridoxine 5'-phosphate from D-erythrose 4-phosphate: step 2/5. Catalyzes the oxidation of erythronate-4-phosphate to 3-hydroxy-2-oxo-4-phosphonooxybutanoate. The sequence is that of Erythronate-4-phosphate dehydrogenase from Saccharophagus degradans (strain 2-40 / ATCC 43961 / DSM 17024).